The chain runs to 568 residues: 2-succinyl-5-enolpyruvyl-6-hydroxy-3-cyclohexene-1-carboxylate synthase (568 aa).

This sequence belongs to the TPP enzyme family. MenD subfamily. Homodimer. The cofactor is Mg(2+). Requires Mn(2+) as cofactor. Thiamine diphosphate is required as a cofactor.

It carries out the reaction isochorismate + 2-oxoglutarate + H(+) = 5-enolpyruvoyl-6-hydroxy-2-succinyl-cyclohex-3-ene-1-carboxylate + CO2. Its pathway is quinol/quinone metabolism; 1,4-dihydroxy-2-naphthoate biosynthesis; 1,4-dihydroxy-2-naphthoate from chorismate: step 2/7. It functions in the pathway quinol/quinone metabolism; menaquinone biosynthesis. Its function is as follows. Catalyzes the thiamine diphosphate-dependent decarboxylation of 2-oxoglutarate and the subsequent addition of the resulting succinic semialdehyde-thiamine pyrophosphate anion to isochorismate to yield 2-succinyl-5-enolpyruvyl-6-hydroxy-3-cyclohexene-1-carboxylate (SEPHCHC). In Actinobacillus pleuropneumoniae serotype 3 (strain JL03), this protein is 2-succinyl-5-enolpyruvyl-6-hydroxy-3-cyclohexene-1-carboxylate synthase.